A 453-amino-acid chain; its full sequence is Trigger factor (453 aa).

One can recognise a PPIase FKBP-type domain in the interval 171 to 256 (GDRITISFKG…VSLIEAPEEL (86 aa)).

This sequence belongs to the FKBP-type PPIase family. Tig subfamily.

Its subcellular location is the cytoplasm. It carries out the reaction [protein]-peptidylproline (omega=180) = [protein]-peptidylproline (omega=0). In terms of biological role, involved in protein export. Acts as a chaperone by maintaining the newly synthesized protein in an open conformation. Functions as a peptidyl-prolyl cis-trans isomerase. The chain is Trigger factor from Nitrobacter winogradskyi (strain ATCC 25391 / DSM 10237 / CIP 104748 / NCIMB 11846 / Nb-255).